Here is a 279-residue protein sequence, read N- to C-terminus: Topoisomerase I damage affected protein 4 (279 aa).

Residues 1–32 (MNANSTTTAIGLTSPFEKLSFFPHSSNLILAH) lie on the Extracellular side of the membrane. Residues 33–53 (LHEIIFSFVFYQLAFSVVAPF) form a helical membrane-spanning segment. Over 54 to 79 (LNKVVFRKHYTTIRDPLLKIDFNVHT) the chain is Cytoplasmic. Residues 70–271 (LLKIDFNVHT…MIRIAKKLAK (202 aa)) form the TLC domain. The helical transmembrane segment at 80–100 (VSMIQAVVSNTVLLPTLTTPM) threads the bilayer. Residues 101–110 (HYNVVTYTDS) lie on the Extracellular side of the membrane. A helical membrane pass occupies residues 111–131 (YSSMVSSLSAGYFIWDLTMCV). Residues 132-135 (RYFK) lie on the Cytoplasmic side of the membrane. A helical membrane pass occupies residues 136-156 (LYGLEFTGHAIGSVYVMLLSL). Over 157–162 (RPFCQP) the chain is Extracellular. The helical transmembrane segment at 163–183 (WIGRFLIYEASTPFVNINWFI) threads the bilayer. At 184–192 (MQCNAKSKN) the chain is on the cytoplasmic side. Residues 193 to 213 (SIPLWFNVVNGLLLMTVFFVV) form a helical membrane-spanning segment. Residues 214 to 238 (RICWGSIASALLFRQMWKVRDELPK) are Extracellular-facing. The chain crosses the membrane as a helical span at residues 239 to 259 (FSAVTMMSLNIFMNLLNVLWF). Residues 260–279 (KKMIRIAKKLAKPAPTSKLD) lie on the Cytoplasmic side of the membrane.

This sequence belongs to the TMEM56 family.

It is found in the membrane. This is Topoisomerase I damage affected protein 4 (TDA4) from Saccharomyces cerevisiae (strain ATCC 204508 / S288c) (Baker's yeast).